Consider the following 694-residue polypeptide: Glycine--tRNA ligase beta subunit (694 aa).

The protein belongs to the class-II aminoacyl-tRNA synthetase family. In terms of assembly, tetramer of two alpha and two beta subunits.

It localises to the cytoplasm. The catalysed reaction is tRNA(Gly) + glycine + ATP = glycyl-tRNA(Gly) + AMP + diphosphate. The sequence is that of Glycine--tRNA ligase beta subunit from Lactiplantibacillus plantarum (strain ATCC BAA-793 / NCIMB 8826 / WCFS1) (Lactobacillus plantarum).